The following is a 200-amino-acid chain: Putative 3-methyladenine DNA glycosylase (200 aa).

Belongs to the DNA glycosylase MPG family.

The chain is Putative 3-methyladenine DNA glycosylase from Bradyrhizobium diazoefficiens (strain JCM 10833 / BCRC 13528 / IAM 13628 / NBRC 14792 / USDA 110).